A 187-amino-acid polypeptide reads, in one-letter code: MYEAGELRKGLKVEIDGDPYVIMEFEFVKPGKGQALYKCKLKNMLTGSQYDHTYRSGDKVGRANLEERKMEYLYFDGENYCFMDCTTYDQIFVPPSQVAEVLDLLKENTVCDVLFFDNRAIGVTLPNFVELAITEADPWVKGDTASGSNKPVTVETGCVLQVPPFIEVGEVIKIDTRTKNYVERVKK.

It belongs to the elongation factor P family.

The protein resides in the cytoplasm. Its pathway is protein biosynthesis; polypeptide chain elongation. In terms of biological role, involved in peptide bond synthesis. Stimulates efficient translation and peptide-bond synthesis on native or reconstituted 70S ribosomes in vitro. Probably functions indirectly by altering the affinity of the ribosome for aminoacyl-tRNA, thus increasing their reactivity as acceptors for peptidyl transferase. The sequence is that of Elongation factor P from Desulfosudis oleivorans (strain DSM 6200 / JCM 39069 / Hxd3) (Desulfococcus oleovorans).